The following is a 286-amino-acid chain: Thymidylate synthase (286 aa).

140–141 (RR) is a binding site for dUMP. Residue C161 is the Nucleophile of the active site. Residues 185–188 (RSND), N196, and 226–228 (HIY) each bind dUMP. D188 contacts (6R)-5,10-methylene-5,6,7,8-tetrahydrofolate. A285 contacts (6R)-5,10-methylene-5,6,7,8-tetrahydrofolate.

The protein belongs to the thymidylate synthase family. Bacterial-type ThyA subfamily. As to quaternary structure, homodimer.

The protein resides in the cytoplasm. It carries out the reaction dUMP + (6R)-5,10-methylene-5,6,7,8-tetrahydrofolate = 7,8-dihydrofolate + dTMP. The protein operates within pyrimidine metabolism; dTTP biosynthesis. Catalyzes the reductive methylation of 2'-deoxyuridine-5'-monophosphate (dUMP) to 2'-deoxythymidine-5'-monophosphate (dTMP) while utilizing 5,10-methylenetetrahydrofolate (mTHF) as the methyl donor and reductant in the reaction, yielding dihydrofolate (DHF) as a by-product. This enzymatic reaction provides an intracellular de novo source of dTMP, an essential precursor for DNA biosynthesis. The sequence is that of Thymidylate synthase from Streptococcus thermophilus (strain ATCC BAA-250 / LMG 18311).